The primary structure comprises 243 residues: Probable transcriptional regulatory protein LGAS_1276 (243 aa).

Residues 1 to 22 (MSGHSKWHNIQGRKNAQDAKRG) are disordered.

It belongs to the TACO1 family.

It localises to the cytoplasm. This chain is Probable transcriptional regulatory protein LGAS_1276, found in Lactobacillus gasseri (strain ATCC 33323 / DSM 20243 / BCRC 14619 / CIP 102991 / JCM 1131 / KCTC 3163 / NCIMB 11718 / NCTC 13722 / AM63).